The following is a 592-amino-acid chain: 2-succinyl-5-enolpyruvyl-6-hydroxy-3-cyclohexene-1-carboxylate synthase (592 aa).

It belongs to the TPP enzyme family. MenD subfamily. Homodimer. Mg(2+) is required as a cofactor. Requires Mn(2+) as cofactor. The cofactor is thiamine diphosphate.

The enzyme catalyses isochorismate + 2-oxoglutarate + H(+) = 5-enolpyruvoyl-6-hydroxy-2-succinyl-cyclohex-3-ene-1-carboxylate + CO2. The protein operates within quinol/quinone metabolism; 1,4-dihydroxy-2-naphthoate biosynthesis; 1,4-dihydroxy-2-naphthoate from chorismate: step 2/7. It participates in quinol/quinone metabolism; menaquinone biosynthesis. Its function is as follows. Catalyzes the thiamine diphosphate-dependent decarboxylation of 2-oxoglutarate and the subsequent addition of the resulting succinic semialdehyde-thiamine pyrophosphate anion to isochorismate to yield 2-succinyl-5-enolpyruvyl-6-hydroxy-3-cyclohexene-1-carboxylate (SEPHCHC). This is 2-succinyl-5-enolpyruvyl-6-hydroxy-3-cyclohexene-1-carboxylate synthase from Haloarcula marismortui (strain ATCC 43049 / DSM 3752 / JCM 8966 / VKM B-1809) (Halobacterium marismortui).